A 495-amino-acid chain; its full sequence is YTH domain-containing protein ECT3 (495 aa).

In terms of domain architecture, YTH spans 261-398; the sequence is AKFYVIKSYS…EQGIKVIKIF (138 aa). Residues 267–269, aspartate 273, 283–284, asparagine 316, tryptophan 340, tryptophan 345, and tryptophan 353 each bind RNA; these read KSY and WS.

As to expression, expressed in the shoot apex, at the sites of leaf formation, and in emerging leaves.

Its subcellular location is the cytoplasm. Specifically recognizes and binds N6-methyladenosine (m6A)-containing RNAs, and regulates mRNA stability. M6A is a modification present at internal sites of mRNAs and some non-coding RNAs and plays a role in mRNA stability and processing. Required for the correct timing of leaf formation and normal leaf morphology. Required for proper trichome branching and morphology. Functions redundantly with ECT2. This is YTH domain-containing protein ECT3 from Arabidopsis thaliana (Mouse-ear cress).